A 288-amino-acid polypeptide reads, in one-letter code: DegV domain-containing protein SAS0714 (288 aa).

The region spanning 3 to 282 is the DegV domain; sequence IAVMTDSTSY…SGGLGLGYVG (280 aa). Residues Thr-62 and Ser-95 each coordinate hexadecanoate.

In terms of biological role, may bind long-chain fatty acids, such as palmitate, and may play a role in lipid transport or fatty acid metabolism. This chain is DegV domain-containing protein SAS0714, found in Staphylococcus aureus (strain MSSA476).